The primary structure comprises 273 residues: Ribosomal RNA small subunit methyltransferase A (273 aa).

S-adenosyl-L-methionine-binding residues include Asn18, Leu20, Gly45, Glu66, Asp91, and Asn113.

It belongs to the class I-like SAM-binding methyltransferase superfamily. rRNA adenine N(6)-methyltransferase family. RsmA subfamily.

Its subcellular location is the cytoplasm. It catalyses the reaction adenosine(1518)/adenosine(1519) in 16S rRNA + 4 S-adenosyl-L-methionine = N(6)-dimethyladenosine(1518)/N(6)-dimethyladenosine(1519) in 16S rRNA + 4 S-adenosyl-L-homocysteine + 4 H(+). Specifically dimethylates two adjacent adenosines (A1518 and A1519) in the loop of a conserved hairpin near the 3'-end of 16S rRNA in the 30S particle. May play a critical role in biogenesis of 30S subunits. The chain is Ribosomal RNA small subunit methyltransferase A from Escherichia fergusonii (strain ATCC 35469 / DSM 13698 / CCUG 18766 / IAM 14443 / JCM 21226 / LMG 7866 / NBRC 102419 / NCTC 12128 / CDC 0568-73).